The following is a 467-amino-acid chain: ATP-dependent protease ATPase subunit HslU (467 aa).

ATP-binding positions include valine 22 and 64–69 (GVGKTE). The tract at residues 149–192 (QTNNPLESLFGGAIPNFGQNNEDEEEPPTEEIKTKRSEIKRQLE) is disordered. Residues 178–192 (EEIKTKRSEIKRQLE) are compositionally biased toward basic and acidic residues. ATP-binding residues include aspartate 280, glutamate 345, and arginine 417.

This sequence belongs to the ClpX chaperone family. HslU subfamily. In terms of assembly, a double ring-shaped homohexamer of HslV is capped on each side by a ring-shaped HslU homohexamer. The assembly of the HslU/HslV complex is dependent on binding of ATP.

Its subcellular location is the cytoplasm. Functionally, ATPase subunit of a proteasome-like degradation complex; this subunit has chaperone activity. The binding of ATP and its subsequent hydrolysis by HslU are essential for unfolding of protein substrates subsequently hydrolyzed by HslV. HslU recognizes the N-terminal part of its protein substrates and unfolds these before they are guided to HslV for hydrolysis. This is ATP-dependent protease ATPase subunit HslU from Staphylococcus aureus (strain MRSA252).